Consider the following 236-residue polypeptide: Potassium/proton antiporter CemA (236 aa).

The next 4 helical transmembrane spans lie at 18-38 (YIISLSFFFILIYQLLNFLVL), 114-134 (IAHVFTDLLIAFLIFCLLINA), 161-181 (LILFTDIFVGFHSSHGWKILI), and 196-216 (FIFLFVATFPVILDTLFKYWI).

The protein belongs to the CemA family.

It is found in the plastid. It localises to the chloroplast inner membrane. It carries out the reaction K(+)(in) + H(+)(out) = K(+)(out) + H(+)(in). Its function is as follows. Contributes to K(+)/H(+) antiport activity by supporting proton efflux to control proton extrusion and homeostasis in chloroplasts in a light-dependent manner to modulate photosynthesis. Prevents excessive induction of non-photochemical quenching (NPQ) under continuous-light conditions. Indirectly promotes efficient inorganic carbon uptake into chloroplasts. In Mesostigma viride (Green alga), this protein is Potassium/proton antiporter CemA.